We begin with the raw amino-acid sequence, 293 residues long: Cytosolic Fe-S cluster assembly factor CFD1 (293 aa).

ATP is bound at residue 25–32 (GKGGVGKS). Residues C201 and C204 each contribute to the [4Fe-4S] cluster site. Phosphoserine is present on S291.

It belongs to the Mrp/NBP35 ATP-binding proteins family. NUBP2/CFD1 subfamily. Heterotetramer of 2 NBP35 and 2 CFD1 chains. The cofactor is [4Fe-4S] cluster.

It is found in the cytoplasm. In terms of biological role, component of the cytosolic iron-sulfur (Fe/S) protein assembly (CIA) machinery. Required for maturation of extramitochondrial Fe-S proteins. The NBP35-CFD1 heterotetramer forms a Fe-S scaffold complex, mediating the de novo assembly of an Fe-S cluster and its transfer to target apoproteins. Nucleotide binding/hydrolysis seems to be critcal for loading of Fe-S clusters onto CFD1 and NBP35. Required for biogenesis and export of both ribosomal subunits, which may reflect a role in assembly of the Fe/S clusters in RLI1, a protein which performs rRNA processing and ribosome export. The polypeptide is Cytosolic Fe-S cluster assembly factor CFD1 (Saccharomyces cerevisiae (strain ATCC 204508 / S288c) (Baker's yeast)).